The primary structure comprises 466 residues: MTLGLVESSRNAAFAVAAHAPVLGLILLGSIVAYVGTLRYIPNVARTLLDRNIFGIDINKSTEEQRQKFAAKRRAGQTEEKEFQKQAIPESLGILVGAMYLSVVVVLTVCLRFLGAAGEGLDNPYASLPGPLMTITVMLLLGFVDDVLDVKWRHKIILTALGSLPLIMTYDGSLSVLMPCAFGRFGLSTMNVMKEWRLGLAAPQGEPTTTFRATAPSTWFSFTVNHRSYVKVTESGAALIYLGPVYLVYLSMLCIFCTNSINILAGVNGVEVGQSIVIAVASVVYNLFQMRLDRQLTPDFSSLDAAAADARDMTSDHQLRALLLLGPFIGVSLALWRYNRYPARVFVGDSYTYFAGTVLAVSSITGVYSKTLLLFFAPQVFNFLISLPQLFSIVPCPRHRVPTWNPRTNLLSNSHNYTILNVILYLFGDMHEAKLTWAILKCQVIACVLGFVVRYVLSAFLYDEVR.

Residues 12–32 (AAFAVAAHAPVLGLILLGSIV) form a helical membrane-spanning segment. Asp-57 is a binding site for UDP-N-acetyl-alpha-D-glucosamine. Residue Asn-59 is glycosylated (N-linked (GlcNAc...) asparagine). Glu-90 contacts UDP-N-acetyl-alpha-D-glucosamine. The next 2 helical transmembrane spans lie at 91 to 111 (SLGILVGAMYLSVVVVLTVCL) and 124 to 144 (PYASLPGPLMTITVMLLLGFV). Lys-155 is a binding site for dolichyl phosphate. A run of 2 helical transmembrane segments spans residues 156 to 176 (IILTALGSLPLIMTYDGSLSV) and 236 to 256 (GAALIYLGPVYLVYLSMLCIF). 255–263 (IFCTNSINI) contributes to the dolichyl phosphate binding site. A Mg(2+)-binding site is contributed by Asn-262. Transmembrane regions (helical) follow at residues 263–283 (ILAGVNGVEVGQSIVIAVASV), 316–336 (DHQLRALLLLGPFIGVSLALW), 345–365 (VFVGDSYTYFAGTVLAVSSIT), and 374–394 (LFFAPQVFNFLISLPQLFSIV). Asn-268 serves as a coordination point for UDP-N-acetyl-alpha-D-glucosamine. Asp-349 is a binding site for Mg(2+). 398-400 (RHR) is a UDP-N-acetyl-alpha-D-glucosamine binding site. Asn-416 carries N-linked (GlcNAc...) asparagine glycosylation. Residues 442–462 (CQVIACVLGFVVRYVLSAFLY) form a helical membrane-spanning segment.

Belongs to the glycosyltransferase 4 family. Mg(2+) is required as a cofactor.

The protein resides in the endoplasmic reticulum membrane. The catalysed reaction is a di-trans,poly-cis-dolichyl phosphate + UDP-N-acetyl-alpha-D-glucosamine = an N-acetyl-alpha-D-glucosaminyl-diphospho-di-trans,poly-cis-dolichol + UMP. Its pathway is protein modification; protein glycosylation. Inhibited by natural nucleoside antibiotic tunicamycin, which acts as a structural analog and competitor of UDP-GlcNAc. In terms of biological role, UDP-N-acetylglucosamine--dolichyl-phosphate N-acetylglucosaminephosphotransferase that operates in the biosynthetic pathway of dolichol-linked oligosaccharides, the glycan precursors employed in protein asparagine (N)-glycosylation. The assembly of dolichol-linked oligosaccharides begins on the cytosolic side of the endoplasmic reticulum membrane and finishes in its lumen. The sequential addition of sugars to dolichol pyrophosphate produces dolichol-linked oligosaccharides containing fourteen sugars, including two GlcNAcs, nine mannoses and three glucoses. Once assembled, the oligosaccharide is transferred from the lipid to nascent proteins by oligosaccharyltransferases. Catalyzes the initial step of dolichol-linked oligosaccharide biosynthesis, transfering GlcNAc-1-P from cytosolic UDP-GlcNAc onto the carrier lipid dolichyl phosphate (P-dolichol), yielding GlcNAc-P-P-dolichol embedded in the cytoplasmic leaflet of the endoplasmic reticulum membrane. This is UDP-N-acetylglucosamine--dolichyl-phosphate N-acetylglucosaminephosphotransferase (NAGT) from Leishmania amazonensis.